The following is a 163-amino-acid chain: NADH-quinone oxidoreductase subunit I (163 aa).

4Fe-4S ferredoxin-type domains are found at residues 54–84 and 94–123; these read LRRY…IESD and TRYD…ETHI. [4Fe-4S] cluster-binding residues include C64, C67, C70, C74, C103, C106, C109, and C113.

It belongs to the complex I 23 kDa subunit family. In terms of assembly, NDH-1 is composed of 14 different subunits. Subunits NuoA, H, J, K, L, M, N constitute the membrane sector of the complex. [4Fe-4S] cluster serves as cofactor.

The protein localises to the cell inner membrane. It catalyses the reaction a quinone + NADH + 5 H(+)(in) = a quinol + NAD(+) + 4 H(+)(out). Functionally, NDH-1 shuttles electrons from NADH, via FMN and iron-sulfur (Fe-S) centers, to quinones in the respiratory chain. The immediate electron acceptor for the enzyme in this species is believed to be ubiquinone. Couples the redox reaction to proton translocation (for every two electrons transferred, four hydrogen ions are translocated across the cytoplasmic membrane), and thus conserves the redox energy in a proton gradient. The protein is NADH-quinone oxidoreductase subunit I of Ralstonia nicotianae (strain ATCC BAA-1114 / GMI1000) (Ralstonia solanacearum).